Reading from the N-terminus, the 480-residue chain is 3-isopropylmalate dehydratase large subunit (480 aa).

[4Fe-4S] cluster is bound by residues Cys357, Cys417, and Cys420. A compositionally biased stretch (polar residues) spans 431–441; sequence GQRCASTSNRN. A disordered region spans residues 431 to 454; it reads GQRCASTSNRNFEGRQGKGGRTHL.

The protein belongs to the aconitase/IPM isomerase family. LeuC type 1 subfamily. As to quaternary structure, heterodimer of LeuC and LeuD. [4Fe-4S] cluster serves as cofactor.

It catalyses the reaction (2R,3S)-3-isopropylmalate = (2S)-2-isopropylmalate. Its pathway is amino-acid biosynthesis; L-leucine biosynthesis; L-leucine from 3-methyl-2-oxobutanoate: step 2/4. Its function is as follows. Catalyzes the isomerization between 2-isopropylmalate and 3-isopropylmalate, via the formation of 2-isopropylmaleate. The sequence is that of 3-isopropylmalate dehydratase large subunit from Mycobacteroides abscessus (strain ATCC 19977 / DSM 44196 / CCUG 20993 / CIP 104536 / JCM 13569 / NCTC 13031 / TMC 1543 / L948) (Mycobacterium abscessus).